We begin with the raw amino-acid sequence, 592 residues long: Leucine-rich repeat and immunoglobulin-like domain-containing nogo receptor-interacting protein 3 (592 aa).

The N-terminal stretch at 1–24 (MTCWLCVLSLPLLLLPAAPPPAGG) is a signal peptide. The LRRNT domain maps to 25-54 (CPARCECTVQTRAVACTRRRLTAVPDGIPA). Residues 25–531 (CPARCECTVQ…LDLTTILVST (507 aa)) are Extracellular-facing. LRR repeat units follow at residues 55–76 (ETRL…DLAA), 79–100 (ALEE…AFAN), 103–124 (RLRV…VFTR), 127–148 (NLTL…TFQD), 151–172 (SLRR…AFAG), 175–196 (ALEE…SLGH), 207–228 (HLAI…LHLE), 247–268 (NLTS…ALRH), 271–292 (HLTC…SFRD), 295–316 (RLRE…AFLG), and 319–340 (QIRL…TFHS). A glycan (N-linked (GlcNAc...) asparagine) is linked at asparagine 127. N-linked (GlcNAc...) asparagine glycosylation occurs at asparagine 185. 3 N-linked (GlcNAc...) asparagine glycosylation sites follow: asparagine 247, asparagine 257, and asparagine 276. The N-linked (GlcNAc...) asparagine glycan is linked to asparagine 324. An LRRCT domain is found at 352-406 (NPLACDCRLLWIVQRRKTLNFDGRLPACATPAEVRGDALRNLPDSVLFEYFVCRK). An Ig-like C2-type domain is found at 407-496 (PKIRERRLQR…GNDTYFATLT (90 aa)). A disulfide bridge links cysteine 429 with cysteine 480. Asparagine 488 and asparagine 512 each carry an N-linked (GlcNAc...) asparagine glycan. A helical transmembrane segment spans residues 532–552 (AMGCITFLGVVLFCFVLLFVW). The Cytoplasmic segment spans residues 553–592 (SRGRGQHKNNFSVEYSFRKVDGPAAAAGQGGARKFNMKMI).

It is found in the membrane. This chain is Leucine-rich repeat and immunoglobulin-like domain-containing nogo receptor-interacting protein 3 (LINGO3), found in Homo sapiens (Human).